Consider the following 1107-residue polypeptide: Membrane-associated guanylate kinase, WW and PDZ domain-containing protein 3 (1107 aa).

Residues 17 to 102 (ECGLSGVGGD…PIRLKTVKPG (86 aa)) enclose the PDZ 1 domain. One can recognise a Guanylate kinase-like domain in the interval 110–284 (RHYLSLQFQK…SMDFRNYLTR (175 aa)). An ATP-binding site is contributed by 117–124 (FQKGSIDH). Residues 210–277 (FDTETQRKRT…SYNQTNSSMD (68 aa)) are disordered. Positions 220–231 (TSVSKMQRTDSS) are enriched in polar residues. Over residues 232–241 (LPEEEDEEER) the composition is skewed to acidic residues. Residues 251 to 261 (TDHRDRQEPSE) are compositionally biased toward basic and acidic residues. Residues 267–277 (PSYNQTNSSMD) show a composition bias toward polar residues. WW domains follow at residues 289-322 (EPLP…DPRL) and 335-368 (GELP…NPVL). The tract at residues 374–398 (KQLNPAPSEGTVHQEPENSQFTRDP) is disordered. 4 PDZ domains span residues 407–489 (HTSL…TLCR), 577–653 (TIPL…LILR), 727–809 (DVFL…TVRR), and 853–940 (DVIL…IAEE). Residues 941 to 975 (EHRGPPSGSNSARQSPAPQHRPMGQTQPTYGTLDR) are disordered. Residues 947-957 (SGSNSARQSPA) show a composition bias toward polar residues. A PDZ 6 domain is found at 1003 to 1085 (PVELERGPRG…KVLLLLRPGT (83 aa)).

Belongs to the MAGUK family.

It is found in the cell membrane. Its subcellular location is the cell junction. The protein localises to the tight junction. In terms of biological role, acts as a scaffolding protein at cell-cell junctions, thereby regulating various cellular and signaling processes. The polypeptide is Membrane-associated guanylate kinase, WW and PDZ domain-containing protein 3 (magi3) (Xenopus tropicalis (Western clawed frog)).